Here is a 190-residue protein sequence, read N- to C-terminus: Endoribonuclease YbeY (190 aa).

The interval 1-20 (MDVENDRPPRRGAAGERNSG) is disordered. Residues histidine 147, histidine 151, and histidine 157 each coordinate Zn(2+).

Belongs to the endoribonuclease YbeY family. The cofactor is Zn(2+).

The protein localises to the cytoplasm. In terms of biological role, single strand-specific metallo-endoribonuclease involved in late-stage 70S ribosome quality control and in maturation of the 3' terminus of the 16S rRNA. The sequence is that of Endoribonuclease YbeY from Nitrobacter hamburgensis (strain DSM 10229 / NCIMB 13809 / X14).